Consider the following 258-residue polypeptide: Isoprenyl transferase (258 aa).

D24 is an active-site residue. D24 serves as a coordination point for Mg(2+). Substrate contacts are provided by residues 25–28, W29, R37, H41, and 69–71; these read GNGR and SSE. Residue N72 is the Proton acceptor of the active site. Substrate contacts are provided by residues W73, R75, R190, and 196-198; that span reads RIS. E209 provides a ligand contact to Mg(2+).

Belongs to the UPP synthase family. Homodimer. Requires Mg(2+) as cofactor.

In terms of biological role, catalyzes the condensation of isopentenyl diphosphate (IPP) with allylic pyrophosphates generating different type of terpenoids. This is Isoprenyl transferase from Ralstonia nicotianae (strain ATCC BAA-1114 / GMI1000) (Ralstonia solanacearum).